Consider the following 293-residue polypeptide: Autophagy-related protein 36 (293 aa).

2 stretches are compositionally biased toward polar residues: residues 98–108 (ISSDSNKNSPP) and 260–273 (GETL…ASSS). 2 disordered regions span residues 98-121 (ISSD…NIRS) and 250-273 (SRSR…ASSS).

In terms of assembly, interacts with PEX3, ATG8 and ATG11.

The protein resides in the peroxisome. In terms of biological role, required for autophagic breakdown of peroxisomes, called pexophagy, through linking peroxisomes to the autophagy apparatus. Involved in regulation of the glyoxylate cycle. The sequence is that of Autophagy-related protein 36 (ATG36) from Saccharomyces cerevisiae (strain ATCC 204508 / S288c) (Baker's yeast).